The sequence spans 572 residues: Proline--tRNA ligase (572 aa).

It belongs to the class-II aminoacyl-tRNA synthetase family. ProS type 1 subfamily. Homodimer.

The protein localises to the cytoplasm. It carries out the reaction tRNA(Pro) + L-proline + ATP = L-prolyl-tRNA(Pro) + AMP + diphosphate. Catalyzes the attachment of proline to tRNA(Pro) in a two-step reaction: proline is first activated by ATP to form Pro-AMP and then transferred to the acceptor end of tRNA(Pro). As ProRS can inadvertently accommodate and process non-cognate amino acids such as alanine and cysteine, to avoid such errors it has two additional distinct editing activities against alanine. One activity is designated as 'pretransfer' editing and involves the tRNA(Pro)-independent hydrolysis of activated Ala-AMP. The other activity is designated 'posttransfer' editing and involves deacylation of mischarged Ala-tRNA(Pro). The misacylated Cys-tRNA(Pro) is not edited by ProRS. The protein is Proline--tRNA ligase of Yersinia pseudotuberculosis serotype O:1b (strain IP 31758).